Reading from the N-terminus, the 665-residue chain is Protein phosphatase 1 regulatory subunit 21 (665 aa).

Coiled-coil stretches lie at residues 1-84, 125-206, 426-477, and 586-627; these read MTDL…SESK, LEAQ…RKYQ, ESRE…EAQV, and KRLA…EDQL.

Component of the FERRY complex.

It is found in the early endosome. Functionally, component of the FERRY complex (Five-subunit Endosomal Rab5 and RNA/ribosome intermediary). The FERRY complex directly interacts with mRNAs and RAB5A, and functions as a RAB5A effector involved in the localization and the distribution of specific mRNAs most likely by mediating their endosomal transport. The complex recruits mRNAs and ribosomes to early endosomes through direct mRNA-interaction. Putative regulator of protein phosphatase 1 (PP1) activity. May play a role in the endosomal sorting process or in endosome maturation pathway. The sequence is that of Protein phosphatase 1 regulatory subunit 21 (ppp1r21) from Danio rerio (Zebrafish).